A 530-amino-acid polypeptide reads, in one-letter code: Ubiquitin carboxyl-terminal hydrolase 17-like protein 12 (530 aa).

Positions 80-375 (AGLQNMGNTC…QAYVLFYIQK (296 aa)) constitute a USP domain. Residue Cys89 is the Nucleophile of the active site. His334 functions as the Proton acceptor in the catalytic mechanism. Composition is skewed to basic and acidic residues over residues 382–392 (SESVSRGREPR) and 398–412 (DTDR…KRDH). Disordered regions lie at residues 382–412 (SESV…KRDH) and 477–530 (NHHP…LVCQ). Low complexity predominate over residues 484-495 (SSLLKLSSTTPT). The segment covering 496–505 (HQESMNTGTL) has biased composition (polar residues). Over residues 510 to 524 (GRARRSKGKNKHSKR) the composition is skewed to basic residues.

Belongs to the peptidase C19 family. USP17 subfamily.

Its subcellular location is the nucleus. It localises to the endoplasmic reticulum. It carries out the reaction Thiol-dependent hydrolysis of ester, thioester, amide, peptide and isopeptide bonds formed by the C-terminal Gly of ubiquitin (a 76-residue protein attached to proteins as an intracellular targeting signal).. Deubiquitinating enzyme that removes conjugated ubiquitin from specific proteins to regulate different cellular processes that may include cell proliferation, progression through the cell cycle, apoptosis, cell migration, and the cellular response to viral infection. The polypeptide is Ubiquitin carboxyl-terminal hydrolase 17-like protein 12 (USP17L12) (Homo sapiens (Human)).